The sequence spans 307 residues: Melanoma-associated antigen F1 (307 aa).

The segment at 1–55 (MLQTPESRGLPVPQAEGEKDGGHDGETRAPTASQERPKEELGAGREEGAAEPALT) is disordered. Basic and acidic residues-rich tracts occupy residues 16–27 (EGEKDGGHDGET) and 35–48 (ERPKEELGAGREEG). One can recognise an MAGE domain in the interval 76 to 277 (LNRTVAELVQ…HWPVQYREAL (202 aa)).

In terms of assembly, interacts (via MAGE domain) with RING-type zinc finger-containing E3 ubiquitin-protein ligases LNX1, TRIM27 and NSMCE1; the interaction is direct. In terms of tissue distribution, ubiquitous.

Enhances ubiquitin ligase activity of RING-type zinc finger-containing E3 ubiquitin ligases. Proposed to act through recruitment and/or stabilization of the E2 ubiquitin-conjugating enzyme at the E3:substrate complex. MAGEF1-NSMCE1 ubiquitin ligase complex promotes proteasomal degradation of MMS19, a key component of the cytosolic iron-sulfur protein assembly (CIA) machinery. Down-regulation of MMS19 impairs the activity of several DNA repair and metabolism enzymes such as ERCC2/XPD, FANCJ, RTEL1 and POLD1 that require iron-sulfur clusters as cofactors. May negatively regulate genome integrity by inhibiting homologous recombination-mediated double-strand break DNA repair. This Homo sapiens (Human) protein is Melanoma-associated antigen F1.